Reading from the N-terminus, the 173-residue chain is ATP synthase subunit beta, mitochondrial (173 aa).

It belongs to the ATPase alpha/beta chains family. F-type ATPases have 2 components, CF(1) - the catalytic core - and CF(0) - the membrane proton channel. CF(1) has five subunits: alpha(3), beta(3), gamma(1), delta(1), epsilon(1). CF(0) has three main subunits: a, b and c.

Its subcellular location is the mitochondrion. It localises to the mitochondrion inner membrane. It carries out the reaction ATP + H2O + 4 H(+)(in) = ADP + phosphate + 5 H(+)(out). Its function is as follows. Mitochondrial membrane ATP synthase (F(1)F(0) ATP synthase or Complex V) produces ATP from ADP in the presence of a proton gradient across the membrane which is generated by electron transport complexes of the respiratory chain. F-type ATPases consist of two structural domains, F(1) - containing the extramembraneous catalytic core and F(0) - containing the membrane proton channel, linked together by a central stalk and a peripheral stalk. During catalysis, ATP synthesis in the catalytic domain of F(1) is coupled via a rotary mechanism of the central stalk subunits to proton translocation. Subunits alpha and beta form the catalytic core in F(1). Rotation of the central stalk against the surrounding alpha(3)beta(3) subunits leads to hydrolysis of ATP in three separate catalytic sites on the beta subunits. The chain is ATP synthase subunit beta, mitochondrial (ATPB) from Actinidia deliciosa (Kiwi).